The primary structure comprises 461 residues: Tubulin gamma-2 chain (461 aa).

142–148 (AGGTGSG) serves as a coordination point for GTP.

This sequence belongs to the tubulin family.

The protein localises to the cytoplasm. It is found in the cytoskeleton. The protein resides in the microtubule organizing center. Its subcellular location is the centrosome. In terms of biological role, tubulin is the major constituent of microtubules. The gamma chain is found at microtubule organizing centers (MTOC) such as the spindle poles or the centrosome, suggesting that it is involved in the minus-end nucleation of microtubule assembly. The sequence is that of Tubulin gamma-2 chain from Euplotoides octocarinatus (Freshwater ciliate).